A 300-amino-acid chain; its full sequence is C-4 methylsterol oxidase erg25 (300 aa).

Residues Thr-140–Thr-276 form the Fatty acid hydroxylase domain. The short motif at His-154–His-158 is the Histidine box-1 element. The Histidine box-2 motif lies at His-167 to His-171. The chain crosses the membrane as a helical span at residues Pro-186–Phe-206. The short motif at His-251–Met-257 is the Histidine box-3 element.

The protein belongs to the sterol desaturase family. Heterotetramer of erg25, erg26, erg27 and erg28. Erg28 acts as a scaffold to tether erg27 and other 4,4-demethylation-related enzymes, forming a demethylation enzyme complex, in the endoplasmic reticulum. The cofactor is Fe cation.

It localises to the endoplasmic reticulum membrane. It catalyses the reaction 4,4-dimethyl-5alpha-cholesta-8,24-dien-3beta-ol + 6 Fe(II)-[cytochrome b5] + 3 O2 + 5 H(+) = 4beta-methylzymosterol-4alpha-carboxylate + 6 Fe(III)-[cytochrome b5] + 4 H2O. It carries out the reaction 4alpha-methylzymosterol + 6 Fe(II)-[cytochrome b5] + 3 O2 + 5 H(+) = 4alpha-carboxyzymosterol + 6 Fe(III)-[cytochrome b5] + 4 H2O. It participates in steroid biosynthesis; zymosterol biosynthesis; zymosterol from lanosterol: step 3/6. Its pathway is steroid metabolism; ergosterol biosynthesis. C-4 methylsterol oxidase; part of the third module of ergosterol biosynthesis pathway that includes by the late steps of the pathway. Erg25 is a catalytic component of the C-4 demethylation complex that catalyzes the three-step monooxygenation required for the demethylation of 4,4-dimethyl and 4alpha-methylsterols. The third module or late pathway involves the ergosterol synthesis itself through consecutive reactions that mainly occur in the endoplasmic reticulum (ER) membrane. Firstly, the squalene synthase erg9 catalyzes the condensation of 2 farnesyl pyrophosphate moieties to form squalene, which is the precursor of all steroids. Secondly, squalene is converted into lanosterol by the consecutive action of the squalene epoxidase erg1 and the lanosterol synthase erg7. The lanosterol 14-alpha-demethylase erg11/cyp1 catalyzes C14-demethylation of lanosterol to produce 4,4'-dimethyl cholesta-8,14,24-triene-3-beta-ol. In the next steps, a complex process involving various demethylation, reduction and desaturation reactions catalyzed by the C-14 reductase erg24 and the C-4 demethylation complex erg25-erg26-erg27 leads to the production of zymosterol. Erg28 likely functions in the C-4 demethylation complex reaction by tethering erg26 and Erg27 to the endoplasmic reticulum or to facilitate interaction between these proteins. Then, the sterol 24-C-methyltransferase erg6 catalyzes the methyl transfer from S-adenosyl-methionine to the C-24 of zymosterol to form fecosterol. The C-8 sterol isomerase erg2 catalyzes the reaction which results in unsaturation at C-7 in the B ring of sterols and thus converts fecosterol to episterol. The sterol-C5-desaturases erg31 and erg32 then catalyze the introduction of a C-5 double bond in the B ring to produce 5-dehydroepisterol. The C-22 sterol desaturase erg5 further converts 5-dehydroepisterol into ergosta-5,7,22,24(28)-tetraen-3beta-ol by forming the C-22(23) double bond in the sterol side chain. Finally, ergosta-5,7,22,24(28)-tetraen-3beta-ol is substrate of the C-24(28) sterol reductase erg4 to produce ergosterol. In the genus Schizosaccharomyces, a second route exists between lanosterol and fecosterol, via the methylation of lanosterol to eburicol by erg6, followed by C14-demethylation by erg11/cyp1 and C4-demethylation by the demethylation complex erg25-erg26-erg27. The polypeptide is C-4 methylsterol oxidase erg25 (Schizosaccharomyces pombe (strain 972 / ATCC 24843) (Fission yeast)).